The sequence spans 121 residues: Large ribosomal subunit protein bL12 (121 aa).

Belongs to the bacterial ribosomal protein bL12 family. Homodimer. Part of the ribosomal stalk of the 50S ribosomal subunit. Forms a multimeric L10(L12)X complex, where L10 forms an elongated spine to which 2 to 4 L12 dimers bind in a sequential fashion. Binds GTP-bound translation factors.

In terms of biological role, forms part of the ribosomal stalk which helps the ribosome interact with GTP-bound translation factors. Is thus essential for accurate translation. In Lactobacillus delbrueckii subsp. bulgaricus (strain ATCC BAA-365 / Lb-18), this protein is Large ribosomal subunit protein bL12.